The following is a 440-amino-acid chain: Ribulose bisphosphate carboxylase large chain (440 aa).

The residue at position 4 (lysine 4) is an N6,N6,N6-trimethyllysine. Substrate is bound by residues asparagine 113 and threonine 163. Catalysis depends on lysine 165, which acts as the Proton acceptor. Residue lysine 167 coordinates substrate. The Mg(2+) site is built by lysine 191, aspartate 193, and glutamate 194. Position 191 is an N6-carboxylysine (lysine 191). Histidine 284 functions as the Proton acceptor in the catalytic mechanism. The substrate site is built by arginine 285, histidine 317, and serine 369.

The protein belongs to the RuBisCO large chain family. Type I subfamily. As to quaternary structure, heterohexadecamer of 8 large chains and 8 small chains; disulfide-linked. The disulfide link is formed within the large subunit homodimers. Mg(2+) is required as a cofactor. The disulfide bond which can form in the large chain dimeric partners within the hexadecamer appears to be associated with oxidative stress and protein turnover.

Its subcellular location is the plastid. The protein resides in the chloroplast. The enzyme catalyses 2 (2R)-3-phosphoglycerate + 2 H(+) = D-ribulose 1,5-bisphosphate + CO2 + H2O. It catalyses the reaction D-ribulose 1,5-bisphosphate + O2 = 2-phosphoglycolate + (2R)-3-phosphoglycerate + 2 H(+). RuBisCO catalyzes two reactions: the carboxylation of D-ribulose 1,5-bisphosphate, the primary event in carbon dioxide fixation, as well as the oxidative fragmentation of the pentose substrate in the photorespiration process. Both reactions occur simultaneously and in competition at the same active site. This chain is Ribulose bisphosphate carboxylase large chain, found in Dicksonia antarctica (Australian tree fern).